A 148-amino-acid chain; its full sequence is Cytochrome c-type biogenesis protein CcmE (148 aa).

Over 1–7 the chain is Cytoplasmic; that stretch reads MKARNKR. A helical; Signal-anchor for type II membrane protein membrane pass occupies residues 8-28; the sequence is LMLVGGGIALLVAAAALVLSA. The Periplasmic segment spans residues 29 to 148; it reads FQQNLVFFHT…AHKTATTVQQ (120 aa). 2 residues coordinate heme: His123 and Tyr127.

This sequence belongs to the CcmE/CycJ family.

Its subcellular location is the cell inner membrane. Its function is as follows. Heme chaperone required for the biogenesis of c-type cytochromes. Transiently binds heme delivered by CcmC and transfers the heme to apo-cytochromes in a process facilitated by CcmF and CcmH. This chain is Cytochrome c-type biogenesis protein CcmE, found in Azoarcus sp. (strain BH72).